We begin with the raw amino-acid sequence, 292 residues long: Histamine N-methyltransferase (292 aa).

E28 is a binding site for substrate. S-adenosyl-L-methionine is bound by residues G60, E89, Q94, S120, and I142. N283 is a substrate binding site.

Belongs to the class I-like SAM-binding methyltransferase superfamily. HNMT family. As to quaternary structure, monomer.

The protein localises to the cytoplasm. The enzyme catalyses histamine + S-adenosyl-L-methionine = N(tau)-methylhistamine + S-adenosyl-L-homocysteine + H(+). Inactivates histamine by N-methylation. Plays an important role in degrading histamine and in regulating the airway response to histamine. This Pongo abelii (Sumatran orangutan) protein is Histamine N-methyltransferase (HNMT).